The sequence spans 603 residues: Probable potassium transport system protein Kup (603 aa).

The next 12 helical transmembrane spans lie at 15–35 (GLVF…IFLL), 43–63 (VIGV…VEYA), 94–114 (AAFI…DGVI), 136–156 (IGQG…FSVQ), 163–183 (ITWV…FSGI), 201–221 (AISF…EVIL), 244–264 (AWRL…AFII), 284–304 (IYIP…QAMI), 336–356 (IYIG…IFEF), 367–387 (GLAV…IFYL), 391–411 (MFRS…LLSN), and 415–435 (IPHG…LIII).

It belongs to the HAK/KUP transporter (TC 2.A.72) family.

It is found in the cell membrane. The enzyme catalyses K(+)(in) + H(+)(in) = K(+)(out) + H(+)(out). In terms of biological role, transport of potassium into the cell. Likely operates as a K(+):H(+) symporter. The protein is Probable potassium transport system protein Kup of Methanosarcina acetivorans (strain ATCC 35395 / DSM 2834 / JCM 12185 / C2A).